Consider the following 278-residue polypeptide: MGSDLTHLEGRPPQRWQWRVFVLAALLSATFAFFTHTCSSPLPQRCRPYLPNVFNKHSLQHNEPEVRDALLAVDSFVRQSFHENPEIDGLVAAVVTANGAIYETALGPLKANETRPEDRGAVDRYSIFRLASGSKLFAMLEILILRERGALQLDDPIAKYLPQFAHKHGGWANEDDIDEGPITIRHLASHMSGMTREYPRGNMDHWPHSLEGIGPPPMNGAPFPDTLEETVLGISHYPLNLPTSTYPVYSNAGMALLGQIAVVANAAAERSQGVDVAR.

Residues 20–37 (VFVLAALLSATFAFFTHT) form a helical membrane-spanning segment. N-linked (GlcNAc...) asparagine glycosylation is present at Asn112.

This sequence belongs to the beta-lactamase family.

Its subcellular location is the membrane. It functions in the pathway mycotoxin biosynthesis. Functionally, beta-lactamase-like protein; part of the gene cluster that mediates the biosynthesis of strobilurin A, an antifungal polyketide that contains a key beta-methoxyacrylate toxophore that targets the complex III of the mitochondrial electron transport chain. Strobilurin biosynthesis begins with construction of benzoyl CoA by step-wise elimination of ammonia from phenylalanine by the phenylalanine ammonia-lyase str11, oxygenation by str8 and retro-Claisen reaction to form benzoic acid, which is activated to its CoA thiolester benzoyl CoA by the dedicated CoA ligase str10. Benzoyl CoA forms the starter unit for the highly reducing polyketide synthase stpks1 that produces the polyketide prestrobilutin A. The FAD-dependent oxygenase str9 then catalyzes the key oxidative rearrangement responsible for the creation of the beta-methoxyacrylate toxophore. Str9 performs epoxidation of the 2,3 olefin of prestrobilutin A, followed by Meinwald rearrangement to furnish the aldehyde intermediate. Rapid enolization of the aldehyde intermediate would give the beta-methoxyacrylate skeleton and methylations catalyzed by str2 and str3 complete the synthesis and lead to the production of strobilurin A. The short-chain dehydrogenase stl2 and the dehydrogenase str4 play a role in the shunt pathway leading to the production of bolineol. The cluster encodes no obvious halogenase gene that could be involved in production of strobilurin B, nor any obvious dimethylallyl-transferase that could be involved in the production of strobilurin G. It is possible that unknown proteins encoded in, or near, the cluster (such as str1 or stl1) may form new classes of halogenases or dimethylally-transferases, or that the responsible genes are located elsewhere on the genome. Similarly, proteins encoded by str5/str6 hydrolases appear to have no chemical role in the biosynthesis of strobilurin A. Finally, no obvious self-resistance gene is found within the cluster. This chain is Beta-lactamase-like protein str5, found in Strobilurus tenacellus.